A 282-amino-acid polypeptide reads, in one-letter code: Transcription factor HES-1 (282 aa).

Residues 1-44 are disordered; sequence MPADIMEKNSSSPVAATPASVNTTPDKPKTASEHRKSSKPIMEK. Residues 10–21 show a composition bias toward low complexity; it reads SSSPVAATPASV. A compositionally biased stretch (basic and acidic residues) spans 26-35; the sequence is DKPKTASEHR. The 58-residue stretch at 34–91 folds into the bHLH domain; the sequence is HRKSSKPIMEKRRRARINESLSQLKTLILDALKKDSSRHSKLEKADILEMTVKHLRNL. An Orange domain is found at 110–143; it reads YRAGFSECMNEVTRFLSTCEGVNTEVRTRLLGHL. 2 disordered regions span residues 158–204 and 256–282; these read QAHP…GSAP and TSVG…PWRN. Pro residues-rich tracts occupy residues 164-174 and 182-202; these read QAPPPPPPSGP and FAPP…PPGS. Positions 264 to 275 are enriched in low complexity; that stretch reads SPSSGSSLTSDS. Residues 277 to 280 carry the WRPW motif motif; it reads WRPW.

As to quaternary structure, interacts with SIRT1. Transcription repression requires formation of a complex with a corepressor protein of the Groucho/TLE family. Interacts (via WPRW motif) with TLE1, and more weakly with TLE2. Interacts with HES6. Interacts with an FA complex, composed of FANCA, FANCF, FANCG and FANCL, but not of FANCC, nor FANCE. In terms of tissue distribution, expressed at high levels in undifferentiated neural precursor cells, but the level of expression decreases as neural differentiation proceeds.

It is found in the nucleus. Functionally, transcriptional repressor of genes that require a bHLH protein for their transcription. May act as a negative regulator of myogenesis by inhibiting the functions of MYOD1 and ASH1. Binds DNA on N-box motifs: 5'-CACNAG-3' with high affinity and on E-box motifs: 5'-CANNTG-3' with low affinity. May play a role in a functional FA core complex response to DNA cross-link damage, being required for the stability and nuclear localization of FA core complex proteins, as well as for FANCD2 monoubiquitination in response to DNA damage. The polypeptide is Transcription factor HES-1 (Hes1) (Mus musculus (Mouse)).